The primary structure comprises 501 residues: Amidophosphoribosyltransferase (501 aa).

Catalysis depends on Cys-2, which acts as the Nucleophile. In terms of domain architecture, Glutamine amidotransferase type-2 spans 2–234 (CGIVGIVGKS…PGEAVYITEE (233 aa)). 3 residues coordinate Mg(2+): Thr-303, Asp-365, and Asp-366.

In the C-terminal section; belongs to the purine/pyrimidine phosphoribosyltransferase family. The cofactor is Mg(2+).

It carries out the reaction 5-phospho-beta-D-ribosylamine + L-glutamate + diphosphate = 5-phospho-alpha-D-ribose 1-diphosphate + L-glutamine + H2O. It participates in purine metabolism; IMP biosynthesis via de novo pathway; N(1)-(5-phospho-D-ribosyl)glycinamide from 5-phospho-alpha-D-ribose 1-diphosphate: step 1/2. Catalyzes the formation of phosphoribosylamine from phosphoribosylpyrophosphate (PRPP) and glutamine. The chain is Amidophosphoribosyltransferase from Pseudomonas aeruginosa (strain ATCC 15692 / DSM 22644 / CIP 104116 / JCM 14847 / LMG 12228 / 1C / PRS 101 / PAO1).